A 51-amino-acid chain; its full sequence is Cytochrome b559 subunit beta (51 aa).

The helical transmembrane segment at 26 to 42 (WLAVHALAVPTVFFIGS) threads the bilayer. H30 provides a ligand contact to heme.

It belongs to the PsbE/PsbF family. As to quaternary structure, heterodimer of an alpha subunit and a beta subunit. PSII is composed of 1 copy each of membrane proteins PsbA, PsbB, PsbC, PsbD, PsbE, PsbF, PsbH, PsbI, PsbJ, PsbK, PsbL, PsbM, PsbT, PsbY, PsbZ, Psb30/Ycf12, at least 3 peripheral proteins of the oxygen-evolving complex and a large number of cofactors. It forms dimeric complexes. It depends on heme b as a cofactor.

It localises to the plastid. Its subcellular location is the chloroplast thylakoid membrane. Its function is as follows. This b-type cytochrome is tightly associated with the reaction center of photosystem II (PSII). PSII is a light-driven water:plastoquinone oxidoreductase that uses light energy to abstract electrons from H(2)O, generating O(2) and a proton gradient subsequently used for ATP formation. It consists of a core antenna complex that captures photons, and an electron transfer chain that converts photonic excitation into a charge separation. This is Cytochrome b559 subunit beta from Bigelowiella natans (Pedinomonas minutissima).